The primary structure comprises 213 residues: Cell division protein SepF 2 (213 aa).

Residues 16–89 (EDDGYDGRGF…ASLAAESSRP (74 aa)) are disordered. A compositionally biased stretch (acidic residues) spans 27–39 (PDDDFEPELDPEP).

This sequence belongs to the SepF family. Homodimer. Interacts with FtsZ.

The protein localises to the cytoplasm. Cell division protein that is part of the divisome complex and is recruited early to the Z-ring. Probably stimulates Z-ring formation, perhaps through the cross-linking of FtsZ protofilaments. Its function overlaps with FtsA. This chain is Cell division protein SepF 2, found in Streptomyces coelicolor (strain ATCC BAA-471 / A3(2) / M145).